The chain runs to 628 residues: Probable potassium transport system protein Kup (628 aa).

Transmembrane regions (helical) follow at residues 15 to 35, 49 to 69, 106 to 126, 141 to 161, 174 to 194, 210 to 230, 254 to 274, 295 to 315, 343 to 363, 369 to 389, 398 to 418, and 425 to 445; these read FAAE…SPLY, FLGG…ILSV, WYLL…GVLT, ISPE…LAVF, FFGP…VYGI, IMLM…CFLA, LFVA…ILLV, LLFL…TGVF, IYVG…VLGF, LASA…ILFI, WPAP…FAFA, and IHDG…VMVS.

It belongs to the HAK/KUP transporter (TC 2.A.72) family.

The protein resides in the cell inner membrane. The catalysed reaction is K(+)(in) + H(+)(in) = K(+)(out) + H(+)(out). Its function is as follows. Transport of potassium into the cell. Likely operates as a K(+):H(+) symporter. This chain is Probable potassium transport system protein Kup, found in Xanthobacter autotrophicus (strain ATCC BAA-1158 / Py2).